A 312-amino-acid polypeptide reads, in one-letter code: Dihydroorotate dehydrogenase B (NAD(+)), catalytic subunit (312 aa).

FMN contacts are provided by residues Ser23 and 47–48; that span reads KA. Residues Lys47 and 71–75 contribute to the substrate site; that span reads NAIGL. The FMN site is built by Asn102 and Asn130. Asn130 is a binding site for substrate. Cys133 functions as the Nucleophile in the catalytic mechanism. The FMN site is built by Lys168 and Ile194. 195–196 is a substrate binding site; the sequence is NT. FMN is bound by residues Gly220, 246 to 247, and 268 to 269; these read GG and GT.

The protein belongs to the dihydroorotate dehydrogenase family. Type 1 subfamily. In terms of assembly, heterotetramer of 2 PyrK and 2 PyrD type B subunits. Requires FMN as cofactor.

Its subcellular location is the cytoplasm. It carries out the reaction (S)-dihydroorotate + NAD(+) = orotate + NADH + H(+). The protein operates within pyrimidine metabolism; UMP biosynthesis via de novo pathway; orotate from (S)-dihydroorotate (NAD(+) route): step 1/1. Its function is as follows. Catalyzes the conversion of dihydroorotate to orotate with NAD(+) as electron acceptor. The polypeptide is Dihydroorotate dehydrogenase B (NAD(+)), catalytic subunit (pyrDB) (Enterococcus faecalis (strain ATCC 47077 / OG1RF)).